Consider the following 212-residue polypeptide: NAD(P)H dehydrogenase (quinone) 3 (212 aa).

The Flavodoxin-like domain occupies 4-192; the sequence is MLVLYYSSYG…DGARFQGRHV (189 aa). Residues 10-15 and 78-80 contribute to the FMN site; these read SSYGHI and TRF. NAD(+) is bound at residue Y12. W98 contacts substrate. FMN contacts are provided by residues 113 to 119 and H134; that span reads STGSQHG. The tract at residues 161 to 182 is disordered; the sequence is YGASTLAEDENHRDRSPSANEL.

The protein belongs to the WrbA family. FMN is required as a cofactor.

It carries out the reaction a quinone + NADH + H(+) = a quinol + NAD(+). The catalysed reaction is a quinone + NADPH + H(+) = a quinol + NADP(+). The protein is NAD(P)H dehydrogenase (quinone) 3 of Rhizobium meliloti (strain 1021) (Ensifer meliloti).